A 531-amino-acid chain; its full sequence is Apolipoprotein N-acyltransferase (531 aa).

A run of 7 helical transmembrane segments spans residues 8–28, 34–54, 74–94, 105–125, 128–148, 178–198, and 206–226; these read IILL…LLAM, FGIF…IDGV, WSFG…AFLV, LAVV…VLVA, LWSD…VAEW, VLNV…PALI, and VGLA…YYRL. A CN hydrolase domain is found at 243 to 493; it reads VQPVIDQAKK…KGVTDAILPG (251 aa). The active-site Proton acceptor is the E287. K351 is an active-site residue. C405 functions as the Nucleophile in the catalytic mechanism. A helical transmembrane segment spans residues 501 to 521; that stretch reads SMLRGRIFWFTGVFLLLVAAI.

The protein belongs to the CN hydrolase family. Apolipoprotein N-acyltransferase subfamily.

The protein localises to the cell inner membrane. It carries out the reaction N-terminal S-1,2-diacyl-sn-glyceryl-L-cysteinyl-[lipoprotein] + a glycerophospholipid = N-acyl-S-1,2-diacyl-sn-glyceryl-L-cysteinyl-[lipoprotein] + a 2-acyl-sn-glycero-3-phospholipid + H(+). The protein operates within protein modification; lipoprotein biosynthesis (N-acyl transfer). Functionally, catalyzes the phospholipid dependent N-acylation of the N-terminal cysteine of apolipoprotein, the last step in lipoprotein maturation. In Sinorhizobium fredii (strain NBRC 101917 / NGR234), this protein is Apolipoprotein N-acyltransferase.